We begin with the raw amino-acid sequence, 402 residues long: MDTKFDDVLTGEQKLRNFNINFGPQHPAAHGVLRLVLELDGEVVERCDPHIGLLHRGTEKLMESRTYLQNLPYFDRLDYVAPMNQEHAWCLAIERLTGVAVPRRASLIRVLYSEIGRVLNHLLNVTTQAMDVGALTPPLWGFEEREKLMVFYERASGARLHAAYFRPGGVHQDLTPRLIEDIEEWAEHFPKVLDDLDELLTENRIFKQRNVDIGIISEKDILDWGFSGVMVRGSGFAWDLRRSQPYECYDEFDFQIPVGKNGDCYDRYLCRMEEMRQSTRIIQQCLAKLRVEKGDVLARGKLTPPPRGEMKTSMEALIHHFKLYTEGFHVPAGEVYAAVEAPKGEFGVYLVADGTNRPYRAKIRAPGFLHLQAIDYIAKGHLLADVSAIIGTLDVVFGEIDR.

This sequence belongs to the complex I 49 kDa subunit family. NDH-1 is composed of 14 different subunits. Subunits NuoB, C, D, E, F, and G constitute the peripheral sector of the complex.

It is found in the cell inner membrane. It catalyses the reaction a quinone + NADH + 5 H(+)(in) = a quinol + NAD(+) + 4 H(+)(out). In terms of biological role, NDH-1 shuttles electrons from NADH, via FMN and iron-sulfur (Fe-S) centers, to quinones in the respiratory chain. The immediate electron acceptor for the enzyme in this species is believed to be ubiquinone. Couples the redox reaction to proton translocation (for every two electrons transferred, four hydrogen ions are translocated across the cytoplasmic membrane), and thus conserves the redox energy in a proton gradient. This Cereibacter sphaeroides (strain ATCC 17029 / ATH 2.4.9) (Rhodobacter sphaeroides) protein is NADH-quinone oxidoreductase subunit D.